We begin with the raw amino-acid sequence, 176 residues long: Dual-action ribosomal maturation protein DarP (176 aa).

This sequence belongs to the DarP family.

Its subcellular location is the cytoplasm. Its function is as follows. Member of a network of 50S ribosomal subunit biogenesis factors which assembles along the 30S-50S interface, preventing incorrect 23S rRNA structures from forming. Promotes peptidyl transferase center (PTC) maturation. The polypeptide is Dual-action ribosomal maturation protein DarP (Haemophilus ducreyi (strain 35000HP / ATCC 700724)).